Reading from the N-terminus, the 624-residue chain is Polycomb group protein EMF2A (624 aa).

A C2H2-type zinc finger spans residues 338-359 (CPFCLVRCGNFKGLECHMTSSH). The segment at 420–445 (DAHIMESGSPEETQAESEDDVQEENE) is disordered. Over residues 432 to 445 (TQAESEDDVQEENE) the composition is skewed to acidic residues. Positions 474 to 609 (LSANRADPRN…SARTMDTCNR (136 aa)) are VEFS-box.

This sequence belongs to the VEFS (VRN2-EMF2-FIS2-SU(Z)12) family. As to quaternary structure, component of the polycomb repressive complex 2 (PRC2), which methylates 'Lys-27' residues of histone H3 (H3K27me3), leading to transcriptional repression of the affected target gene. In terms of tissue distribution, widely expressed. Highly expressed in shoot apical meristem and inflorescence meristem. Expressed in roots, leaves and immature seeds.

In terms of biological role, polycomb group (PcG) protein. PcG proteins act by forming multiprotein complexes, which are required to maintain the transcriptionally repressive state of homeotic genes throughout development. PcG proteins are not required to initiate repression, but to maintain it during later stages of development. They act via the methylation of histones, rendering chromatin heritably changed in its expressibility. The sequence is that of Polycomb group protein EMF2A from Oryza sativa subsp. japonica (Rice).